The sequence spans 160 residues: MVSFKAILTLSLIGAAFATPIEQRAAEPVEDSGAVANSPEGSGMDLGGTDPTADAIEERGLLVRNILRQLLNNKQSGLTIISSTSNAITWLSRPPRRGRSLREYPVFQQHHKVYNYNSRPKENPGPFRLIATKDSRHFCGIISHDGIGHNPNAGLFHLCK.

The first 18 residues, 1–18 (MVSFKAILTLSLIGAAFA), serve as a signal peptide directing secretion. The tract at residues 26 to 51 (AEPVEDSGAVANSPEGSGMDLGGTDP) is disordered. Glu-103 serves as the catalytic Proton acceptor. His-144 (proton donor) is an active-site residue.

Belongs to the ribonuclease U2 family.

Its subcellular location is the secreted. In terms of biological role, this purine-specific ribonuclease cleaves 28S RNA in eukaryotic ribosomes, inhibits protein synthesis, and shows antitumor activity. The protein is Ribonuclease ARB_07070 of Arthroderma benhamiae (strain ATCC MYA-4681 / CBS 112371) (Trichophyton mentagrophytes).